Here is a 57-residue protein sequence, read N- to C-terminus: UPF0391 membrane protein RPD_2934 (57 aa).

2 consecutive transmembrane segments (helical) span residues 6–26 (WALI…TGVS) and 35–55 (ILFY…FTIF).

The protein belongs to the UPF0391 family.

It localises to the cell membrane. This chain is UPF0391 membrane protein RPD_2934, found in Rhodopseudomonas palustris (strain BisB5).